Here is a 254-residue protein sequence, read N- to C-terminus: 3-deoxy-manno-octulosonate cytidylyltransferase (254 aa).

It belongs to the KdsB family.

The protein resides in the cytoplasm. The catalysed reaction is 3-deoxy-alpha-D-manno-oct-2-ulosonate + CTP = CMP-3-deoxy-beta-D-manno-octulosonate + diphosphate. Its pathway is nucleotide-sugar biosynthesis; CMP-3-deoxy-D-manno-octulosonate biosynthesis; CMP-3-deoxy-D-manno-octulosonate from 3-deoxy-D-manno-octulosonate and CTP: step 1/1. Functionally, activates KDO (a required 8-carbon sugar) for incorporation into bacterial lipopolysaccharide in Gram-negative bacteria. This chain is 3-deoxy-manno-octulosonate cytidylyltransferase, found in Lawsonia intracellularis (strain PHE/MN1-00).